A 120-amino-acid chain; its full sequence is Immunoglobulin kappa variable 2-24 (120 aa).

The signal sequence occupies residues 1–19 (MRLLAQLLGLLMLWVPGSS). The 101-residue stretch at 20–120 (GDIVMTQTPL…YYCMQATQFP (101 aa)) folds into the Ig-like domain. The interval 21–43 (DIVMTQTPLSSPVTLGQPASISC) is framework-1. Cys43 and Cys113 are joined by a disulfide. Residues 44 to 59 (RSSQSLVHSDGNTYLS) form a complementarity-determining-1 region. The framework-2 stretch occupies residues 60 to 74 (WLQQRPGQPPRLLIY). Positions 75–81 (KISNRFS) are complementarity-determining-2. The interval 82–113 (GVPDRFSGSGAGTDFTLKISRVEAEDVGVYYC) is framework-3. Residues 114-120 (MQATQFP) form a complementarity-determining-3 region.

In terms of assembly, immunoglobulins are composed of two identical heavy chains and two identical light chains; disulfide-linked.

It is found in the secreted. The protein resides in the cell membrane. In terms of biological role, v region of the variable domain of immunoglobulin light chains that participates in the antigen recognition. Immunoglobulins, also known as antibodies, are membrane-bound or secreted glycoproteins produced by B lymphocytes. In the recognition phase of humoral immunity, the membrane-bound immunoglobulins serve as receptors which, upon binding of a specific antigen, trigger the clonal expansion and differentiation of B lymphocytes into immunoglobulins-secreting plasma cells. Secreted immunoglobulins mediate the effector phase of humoral immunity, which results in the elimination of bound antigens. The antigen binding site is formed by the variable domain of one heavy chain, together with that of its associated light chain. Thus, each immunoglobulin has two antigen binding sites with remarkable affinity for a particular antigen. The variable domains are assembled by a process called V-(D)-J rearrangement and can then be subjected to somatic hypermutations which, after exposure to antigen and selection, allow affinity maturation for a particular antigen. The polypeptide is Immunoglobulin kappa variable 2-24 (Homo sapiens (Human)).